Reading from the N-terminus, the 82-residue chain is Large ribosomal subunit protein bL31B (82 aa).

Belongs to the bacterial ribosomal protein bL31 family. Type B subfamily. Part of the 50S ribosomal subunit.

This is Large ribosomal subunit protein bL31B from Proteus mirabilis (strain HI4320).